A 590-amino-acid polypeptide reads, in one-letter code: Aspartate--tRNA ligase (590 aa).

Glutamate 175 contributes to the L-aspartate binding site. The tract at residues 199 to 202 is aspartate; it reads QIFK. Arginine 221 is a binding site for L-aspartate. ATP-binding positions include 221-223 and glutamine 230; that span reads RDE. L-aspartate is bound at residue histidine 449. ATP is bound at residue glutamate 483. Arginine 490 contacts L-aspartate. 535–538 is an ATP binding site; sequence GLDR.

The protein belongs to the class-II aminoacyl-tRNA synthetase family. Type 1 subfamily. Homodimer.

It localises to the cytoplasm. It catalyses the reaction tRNA(Asp) + L-aspartate + ATP = L-aspartyl-tRNA(Asp) + AMP + diphosphate. Its function is as follows. Catalyzes the attachment of L-aspartate to tRNA(Asp) in a two-step reaction: L-aspartate is first activated by ATP to form Asp-AMP and then transferred to the acceptor end of tRNA(Asp). The sequence is that of Aspartate--tRNA ligase from Geobacillus kaustophilus (strain HTA426).